We begin with the raw amino-acid sequence, 338 residues long: Mugineic-acid 3-dioxygenase (338 aa).

The region spanning 180-283 (DISGGRVVVD…RLSVASFIVP (104 aa)) is the Fe2OG dioxygenase domain. 3 residues coordinate Fe cation: His208, Asp210, and His264. Position 274 (Arg274) interacts with 2-oxoglutarate.

This sequence belongs to the iron/ascorbate-dependent oxidoreductase family. The cofactor is Fe(2+). L-ascorbate serves as cofactor. As to expression, expressed in roots, but not in leaves.

The enzyme catalyses mugineate + 2-oxoglutarate + O2 = 3-epihydroxymugineate + succinate + CO2 + H(+). It catalyses the reaction 2'-deoxymugineate + 2-oxoglutarate + O2 = 3-epihydroxy-2'-deoxymugineate + succinate + CO2 + H(+). In terms of biological role, involved in the biosynthesis of mugineic acid family of phytosiderophores. Hydroxylates the C-3 positions of mugineic acid (MA) and 2'-deoxymugineic acid (DMA). May be involved in boron tolerance. This is Mugineic-acid 3-dioxygenase (IDS2) from Hordeum vulgare (Barley).